The primary structure comprises 95 residues: MLHTLSHSPWHADIEGLLRMLGDGDELLLIQDGVLAAIDGGRFIEILNNAPIKVIALKDDIDARGLAGQISTKIDVVGYTDFVKLAIKHPTQMSW.

This sequence belongs to the DsrH/TusB family. In terms of assembly, heterohexamer, formed by a dimer of trimers. The hexameric TusBCD complex contains 2 copies each of TusB, TusC and TusD. The TusBCD complex interacts with TusE.

Its subcellular location is the cytoplasm. Functionally, part of a sulfur-relay system required for 2-thiolation of 5-methylaminomethyl-2-thiouridine (mnm(5)s(2)U) at tRNA wobble positions. In Enterobacter sp. (strain 638), this protein is Protein TusB.